Reading from the N-terminus, the 80-residue chain is Exodeoxyribonuclease 7 small subunit (80 aa).

It belongs to the XseB family. As to quaternary structure, heterooligomer composed of large and small subunits.

The protein resides in the cytoplasm. The catalysed reaction is Exonucleolytic cleavage in either 5'- to 3'- or 3'- to 5'-direction to yield nucleoside 5'-phosphates.. In terms of biological role, bidirectionally degrades single-stranded DNA into large acid-insoluble oligonucleotides, which are then degraded further into small acid-soluble oligonucleotides. The polypeptide is Exodeoxyribonuclease 7 small subunit (Escherichia coli O6:K15:H31 (strain 536 / UPEC)).